The primary structure comprises 71 residues: Small ribosomal subunit protein bS21 (71 aa).

Residues 37–71 are disordered; that stretch reads HYEKPTQERKRKAAAAVKRHMKRLSREQARRRRLY. Basic residues predominate over residues 45 to 71; that stretch reads RKRKAAAAVKRHMKRLSREQARRRRLY.

This sequence belongs to the bacterial ribosomal protein bS21 family.

The sequence is that of Small ribosomal subunit protein bS21 from Alkalilimnicola ehrlichii (strain ATCC BAA-1101 / DSM 17681 / MLHE-1).